The following is a 66-amino-acid chain: Phylloseptin-H9 (66 aa).

Positions 1–22 (MAFLKKSLFLVLFLGLVSLSIC) are cleaved as a signal peptide. Positions 23 to 44 (EEEKRETEEEENDQEEDDKSEE) are excised as a propeptide. A disordered region spans residues 24–44 (EEKRETEEEENDQEEDDKSEE). Residues 30 to 41 (EEEENDQEEDDK) show a composition bias toward acidic residues. Leucine 65 is modified (leucine amide).

In terms of tissue distribution, expressed by the skin glands.

Its subcellular location is the secreted. Has antimicrobial activity. This chain is Phylloseptin-H9, found in Pithecopus hypochondrialis (Orange-legged leaf frog).